Reading from the N-terminus, the 1108-residue chain is Retinal guanylyl cyclase 2 (1108 aa).

The N-terminal stretch at 1–50 (MFLGLGRFSRLVLWFAAFRKLLGHHGLASAKFLWCLCLLSVMSLPQQVWT) is a signal peptide. Residues 51–467 (LPYKIGVVGP…KICHGGIDPA (417 aa)) are Extracellular-facing. Cys-104 and Cys-132 are oxidised to a cystine. The helical transmembrane segment at 468–490 (FAMMVCLTLLIALLSINGFAYFI) threads the bilayer. Over 491 to 1108 (RRRINKIQLI…AERQLVRNKP (618 aa)) the chain is Cytoplasmic. The 281-residue stretch at 532-812 (FQITSEVQSG…DEIFNQFKTF (281 aa)) folds into the Protein kinase domain. Residues 884–1014 (TLYFSDIVGF…DTVNTASRME (131 aa)) form the Guanylate cyclase domain.

The protein belongs to the adenylyl cyclase class-4/guanylyl cyclase family. Homodimer. Interacts with RD3; promotes the exit of GUCY2F from the endoplasmic reticulum and its trafficking to the photoreceptor outer segments. There are 9 conserved cysteine residues in sensory guanylate cyclases, 6 in the extracellular domain, which may be involved in intra- or interchain disulfide bonds. Retina. Localized exclusively in the outer nuclear layer and inner segments of the rod and cone photoreceptor cells.

Its subcellular location is the photoreceptor outer segment membrane. It catalyses the reaction GTP = 3',5'-cyclic GMP + diphosphate. With respect to regulation, activated by GUCA1B when free calcium ions concentration is low, and inhibited by GUCA1B when free calcium ions concentration is high. Inhibited by RD3. In terms of biological role, responsible for the synthesis of cyclic GMP (cGMP) in rods and cones of photoreceptors. Plays an essential role in phototransduction, by mediating cGMP replenishment. May also participate in the trafficking of membrane-asociated proteins to the photoreceptor outer segment membrane. In Homo sapiens (Human), this protein is Retinal guanylyl cyclase 2 (GUCY2F).